The chain runs to 840 residues: Probable alpha-glucuronidase A (840 aa).

A signal peptide spans 1-19; sequence MWSGIPIFALLSSIGIAAA. N50, N149, N222, N262, N279, N310, N465, N527, N576, N610, N682, N723, and N732 each carry an N-linked (GlcNAc...) asparagine glycan.

It belongs to the glycosyl hydrolase 67 family.

It is found in the secreted. The catalysed reaction is an alpha-D-glucuronoside + H2O = D-glucuronate + an alcohol. Functionally, alpha-glucuronidase involved in the hydrolysis of xylan, a major structural heterogeneous polysaccharide found in plant biomass representing the second most abundant polysaccharide in the biosphere, after cellulose. Releases 4-O-methylglucuronic acid from xylan. This is Probable alpha-glucuronidase A (aguA) from Aspergillus fumigatus (strain CBS 144.89 / FGSC A1163 / CEA10) (Neosartorya fumigata).